We begin with the raw amino-acid sequence, 178 residues long: Conodipine-P2 (178 aa).

An N-terminal signal peptide occupies residues Met1–Ser24. Residues Pro38, Pro42, and Pro49 each carry the 4-hydroxyproline modification. The active site involves His54. A propeptide spans Lys98–Arg130 (interchain peptide). Gln131 bears the Pyrrolidone carboxylic acid mark. Pro137 is modified (4-hydroxyproline).

It belongs to the phospholipase A2 family. Group IX subfamily. As to quaternary structure, heterodimer of an alpha and a beta chain; probably disulfide-linked. Ca(2+) is required as a cofactor. Expressed by the venom duct.

The protein localises to the secreted. The enzyme catalyses a 1,2-diacyl-sn-glycero-3-phosphocholine + H2O = a 1-acyl-sn-glycero-3-phosphocholine + a fatty acid + H(+). Functionally, catalyzes the calcium-dependent hydrolysis of the 2-acyl groups in 3-sn-phosphoglycerides. The sequence is that of Conodipine-P2 from Conus purpurascens (Purple cone).